Here is a 385-residue protein sequence, read N- to C-terminus: Calcium/calmodulin-dependent protein kinase type 1D (385 aa).

The Protein kinase domain occupies 23 to 279 (FEFKETLGTG…CEQAARHPWI (257 aa)). Residues 29–37 (LGTGAFSEV) and K52 contribute to the ATP site. K113 is covalently cross-linked (Glycyl lysine isopeptide (Lys-Gly) (interchain with G-Cter in SUMO2)). A Phosphoserine modification is found at S122. D144 serves as the catalytic Proton acceptor. Phosphothreonine; by CaMKK1 and CaMKK2 is present on T180. Residues 279 to 319 (IAGDTALNKNIHESVSAQIRKNFAKSKWRQAFNATAVVRHM) are autoinhibitory domain. The interval 299 to 320 (KNFAKSKWRQAFNATAVVRHMR) is calmodulin-binding. Positions 318-324 (HMRKLHL) match the Nuclear export signal motif. Residues 360–385 (SSGVSGVGAERRPRPTTVTAVHSGSK) form a disordered region. Polar residues predominate over residues 375-385 (TTVTAVHSGSK).

The protein belongs to the protein kinase superfamily. CAMK Ser/Thr protein kinase family. CaMK subfamily. In terms of tissue distribution, widely expressed. Highly and mostly expressed in polymorphonuclear leukocytes (neutrophilic and eosinophilic granulocytes) while little or no expression is observed in monocytes and lymphocytes.

The protein localises to the cytoplasm. The protein resides in the nucleus. The enzyme catalyses L-seryl-[protein] + ATP = O-phospho-L-seryl-[protein] + ADP + H(+). It catalyses the reaction L-threonyl-[protein] + ATP = O-phospho-L-threonyl-[protein] + ADP + H(+). With respect to regulation, activated by Ca(2+)/calmodulin. Binding of calmodulin results in conformational change that relieves intrasteric autoinhibition and allows phosphorylation of Thr-180 within the activation loop by CaMKK1 or CaMKK2. Phosphorylation of Thr-180 results in several fold increase in total activity. Unlike CaMK4, may be unable to exhibit autonomous activity after Ca(2+)/calmodulin activation. Its function is as follows. Calcium/calmodulin-dependent protein kinase that operates in the calcium-triggered CaMKK-CaMK1 signaling cascade and, upon calcium influx, activates CREB-dependent gene transcription, regulates calcium-mediated granulocyte function and respiratory burst and promotes basal dendritic growth of hippocampal neurons. In neutrophil cells, required for cytokine-induced proliferative responses and activation of the respiratory burst. Activates the transcription factor CREB1 in hippocampal neuron nuclei. May play a role in apoptosis of erythroleukemia cells. In vitro, phosphorylates transcription factor CREM isoform Beta. The chain is Calcium/calmodulin-dependent protein kinase type 1D (CAMK1D) from Homo sapiens (Human).